The primary structure comprises 164 residues: Phosphopantetheine adenylyltransferase (164 aa).

Substrate is bound at residue S9. ATP is bound by residues 9-10 (SF) and H17. Substrate contacts are provided by K41, L73, and K87. ATP-binding positions include 88–90 (GLR), E98, and 122–128 (YSYLSSS).

Belongs to the bacterial CoaD family. Homohexamer. Mg(2+) is required as a cofactor.

Its subcellular location is the cytoplasm. It catalyses the reaction (R)-4'-phosphopantetheine + ATP + H(+) = 3'-dephospho-CoA + diphosphate. It participates in cofactor biosynthesis; coenzyme A biosynthesis; CoA from (R)-pantothenate: step 4/5. Its function is as follows. Reversibly transfers an adenylyl group from ATP to 4'-phosphopantetheine, yielding dephospho-CoA (dPCoA) and pyrophosphate. This is Phosphopantetheine adenylyltransferase from Rhodococcus jostii (strain RHA1).